Consider the following 307-residue polypeptide: Ribonuclease Z (307 aa).

Positions 63, 65, 67, 68, 141, 212, and 270 each coordinate Zn(2+). The active-site Proton acceptor is the Asp67.

The protein belongs to the RNase Z family. In terms of assembly, homodimer. Requires Zn(2+) as cofactor.

The enzyme catalyses Endonucleolytic cleavage of RNA, removing extra 3' nucleotides from tRNA precursor, generating 3' termini of tRNAs. A 3'-hydroxy group is left at the tRNA terminus and a 5'-phosphoryl group is left at the trailer molecule.. In terms of biological role, zinc phosphodiesterase, which displays some tRNA 3'-processing endonuclease activity. Probably involved in tRNA maturation, by removing a 3'-trailer from precursor tRNA. The polypeptide is Ribonuclease Z (Bacillus anthracis (strain A0248)).